The sequence spans 217 residues: Adenylate kinase (217 aa).

10 to 15 contacts ATP; that stretch reads GAGKGT. The tract at residues 30–59 is NMP; sequence STGDMFRAAMKEGTPLGLQAKEYIDRGDLV. AMP-binding positions include Thr31, Arg36, 57–59, 85–88, and Gln92; these read DLV and GFPR. Residues 126-163 form an LID region; sequence GRRICRNCGATYHLVFHPPAQPGVCDKCGGELYQRPDD. Arg127 is an ATP binding site. Residues Cys130 and Cys133 each contribute to the Zn(2+) site. 136–137 contacts ATP; it reads TY. Zn(2+) contacts are provided by Cys150 and Cys153. Residues Arg160 and Arg171 each coordinate AMP. Gln199 is an ATP binding site.

It belongs to the adenylate kinase family. As to quaternary structure, monomer.

It is found in the cytoplasm. It carries out the reaction AMP + ATP = 2 ADP. Its pathway is purine metabolism; AMP biosynthesis via salvage pathway; AMP from ADP: step 1/1. In terms of biological role, catalyzes the reversible transfer of the terminal phosphate group between ATP and AMP. Plays an important role in cellular energy homeostasis and in adenine nucleotide metabolism. In Geobacillus thermodenitrificans (strain NG80-2), this protein is Adenylate kinase.